The sequence spans 850 residues: Pro-neuregulin-2, membrane-bound isoform (850 aa).

The interval Met1 to Asp96 is disordered. Residues Met1–Ala111 constitute a propeptide that is removed on maturation. The span at Ser20–Pro59 shows a compositional bias: low complexity. Asn52 and Asn53 each carry an N-linked (GlcNAc...) asparagine glycan. The span at Ala60 to Arg74 shows a compositional bias: pro residues. A compositionally biased stretch (low complexity) spans Ser75–Gly92. At Cys112–Arg405 the chain is on the extracellular side. N-linked (GlcNAc...) asparagine glycans are attached at residues Asn147, Asn278, and Asn346. The 96-residue stretch at Pro237–Ser332 folds into the Ig-like C2-type domain. Intrachain disulfides connect Cys257-Cys311, Cys345-Cys359, Cys353-Cys370, and Cys372-Cys381. One can recognise an EGF-like domain in the interval His341–Leu382. Residues Val406–Ala426 form a helical membrane-spanning segment. The Cytoplasmic segment spans residues Tyr427–Leu850. Disordered stretches follow at residues Thr492–Ser535, Glu566–Asp585, Leu647–Ala681, Leu700–Leu788, and Ala801–Leu850. Residues Ser494 to Ser506 show a composition bias toward low complexity. Residues His514–Glu527 show a composition bias toward basic and acidic residues. Residues Pro651 to Gly665 are compositionally biased toward pro residues. Positions Gly750–Ser767 are enriched in low complexity.

This sequence belongs to the neuregulin family. In terms of assembly, interacts with ERBB3 and ERBB4. Post-translationally, proteolytic cleavage close to the plasma membrane on the external face leads to the release of the soluble growth factor form. Extensive glycosylation precedes the proteolytic cleavage. In terms of tissue distribution, restricted to the cerebellum in the adult.

The protein localises to the cell membrane. The protein resides in the secreted. In terms of biological role, direct ligand for ERBB3 and ERBB4 tyrosine kinase receptors. Concomitantly recruits ERBB1 and ERBB2 coreceptors, resulting in ligand-stimulated tyrosine phosphorylation and activation of the ERBB receptors. May also promote the heterodimerization with the EGF receptor. The chain is Pro-neuregulin-2, membrane-bound isoform (NRG2) from Homo sapiens (Human).